The primary structure comprises 587 residues: Protein SIX6OS1 (587 aa).

Residues 356 to 378 are disordered; that stretch reads TPQKQSNSNQWSEKGDKDAEYGD. The segment covering 357–367 has biased composition (polar residues); that stretch reads PQKQSNSNQWS. Residues 368-378 are compositionally biased toward basic and acidic residues; the sequence is EKGDKDAEYGD. Residue Ser-439 is modified to Phosphoserine. The segment at 568 to 587 is disordered; the sequence is SSSLKGFSSSSQNTTQFTFF.

In terms of assembly, interacts with SYCE1. Interacts with proteasome subunit PSMA8; to participate in meiosis progression during spermatogenesis. As to expression, highest expression in retina, skeletal muscle, testis and colon.

It localises to the chromosome. Functionally, meiotic protein that localizes to the central element of the synaptonemal complex and is required for chromosome synapsis during meiotic recombination. Required for the appropriate processing of intermediate recombination nodules before crossover formation. This Homo sapiens (Human) protein is Protein SIX6OS1.